The primary structure comprises 227 residues: MGQLGALLHLVDPTLPIGGFNHSNGLETFVQQGKVNSRASLEEYVQTQLMQNWIYNDGAYLSLAFDAMANHDLDRLLQLDQELAASKIARESREGSYKLGVRLLKIFIRYENHPLLSEFQQAISEKRCQGYFPIVFAMVAQAMNLDKAETLYAFYYNAAVGVVTNGVKLVPLSQMDGQDILFALRTPLAQAVENSLNPDLDWLGAATLASDIRSMQHEQLYTRLYMS.

This sequence belongs to the UreF family. In terms of assembly, ureD, UreF and UreG form a complex that acts as a GTP-hydrolysis-dependent molecular chaperone, activating the urease apoprotein by helping to assemble the nickel containing metallocenter of UreC. The UreE protein probably delivers the nickel.

The protein localises to the cytoplasm. Its function is as follows. Required for maturation of urease via the functional incorporation of the urease nickel metallocenter. In Actinobacillus pleuropneumoniae serotype 5b (strain L20), this protein is Urease accessory protein UreF.